Reading from the N-terminus, the 419-residue chain is L-rhamnose isomerase (419 aa).

Mn(2+)-binding residues include His-262, Asp-294, and Asp-296.

It belongs to the rhamnose isomerase family. Homotetramer. Requires Mn(2+) as cofactor.

The protein localises to the cytoplasm. The catalysed reaction is L-rhamnopyranose = L-rhamnulose. Its pathway is carbohydrate degradation; L-rhamnose degradation; glycerone phosphate from L-rhamnose: step 1/3. Functionally, catalyzes the interconversion of L-rhamnose and L-rhamnulose. In Escherichia coli O7:K1 (strain IAI39 / ExPEC), this protein is L-rhamnose isomerase.